Consider the following 194-residue polypeptide: Phosphoheptose isomerase (194 aa).

Residues 37–194 form the SIS domain; sequence ISNSFKQGGK…LIEFEMAKQA (158 aa). Substrate is bound at residue 52-54; the sequence is NGG. The Zn(2+) site is built by histidine 61 and glutamate 65. Residues glutamate 65, 93 to 94, 119 to 121, serine 124, and glutamine 172 contribute to the substrate site; these read ND and STS. Residues glutamine 172 and histidine 180 each contribute to the Zn(2+) site.

Belongs to the SIS family. GmhA subfamily. In terms of assembly, homotetramer. Requires Zn(2+) as cofactor.

The protein resides in the cytoplasm. It carries out the reaction 2 D-sedoheptulose 7-phosphate = D-glycero-alpha-D-manno-heptose 7-phosphate + D-glycero-beta-D-manno-heptose 7-phosphate. The protein operates within carbohydrate biosynthesis; D-glycero-D-manno-heptose 7-phosphate biosynthesis; D-glycero-alpha-D-manno-heptose 7-phosphate and D-glycero-beta-D-manno-heptose 7-phosphate from sedoheptulose 7-phosphate: step 1/1. Its function is as follows. Catalyzes the isomerization of sedoheptulose 7-phosphate in D-glycero-D-manno-heptose 7-phosphate. This Haemophilus influenzae (strain PittEE) protein is Phosphoheptose isomerase.